The primary structure comprises 413 residues: Na(+)/H(+) antiporter NhaA (413 aa).

Helical transmembrane passes span Leu-15–Val-35, Leu-57–Ile-77, Ala-93–Leu-113, Gly-123–Gly-143, Ile-152–Phe-172, Ala-175–Phe-195, Val-211–Leu-231, Trp-261–Gly-281, Val-295–Ile-315, Gly-333–Phe-353, and Val-364–Thr-384.

The protein belongs to the NhaA Na(+)/H(+) (TC 2.A.33) antiporter family.

The protein localises to the cell inner membrane. The catalysed reaction is Na(+)(in) + 2 H(+)(out) = Na(+)(out) + 2 H(+)(in). Functionally, na(+)/H(+) antiporter that extrudes sodium in exchange for external protons. The chain is Na(+)/H(+) antiporter NhaA from Caulobacter vibrioides (strain ATCC 19089 / CIP 103742 / CB 15) (Caulobacter crescentus).